A 221-amino-acid chain; its full sequence is Transcription factor otaR1 (221 aa).

Positions 109 to 146 (ASRSRPAFSTPASRPGLSSAKSPSLGATSPGSMDRSEE) are disordered. Residues 127–139 (SAKSPSLGATSPG) show a composition bias toward polar residues. The tract at residues 152-192 (KKYHEKYKERNRLAAGRSRQKQADLINLLQAEQQEEERRRK) is basic motif. A bZIP domain is found at 152–215 (KKYHEKYKER…VDMKQELQHH (64 aa)). A leucine-zipper region spans residues 198–212 (IANMQKELVDMKQEL).

It localises to the nucleus. Its function is as follows. Transcription factor; part of the gene cluster that mediates the biosynthesis of ochratoxin A (OTA), a mycotoxin demonstrated to have nephrotoxic, immunotoxic, genotoxic, neurotoxic, and teratogenic properties. Positively regulates the expression of the OTA biosynthetic genes and subsequent production of OTA. Probably binds to conserved 5'-ACGT-3' bZIP binding motifs found in multiple copies (3 to 4) in the promoters of the OTA biosynthetic genes. Acts not only as a pathway-specific regulator of the OTA cluster but also binds at other chromosomal positions outside the OTA cluster and can act as a broad regulator. Negatively regulates pathogenicity and plays a critical role in tolerance to reactive oxygen species (ROS). The chain is Transcription factor otaR1 from Aspergillus niger (strain ATCC MYA-4892 / CBS 513.88 / FGSC A1513).